Consider the following 325-residue polypeptide: tRNA N(3)-methylcytidine methyltransferase Mettl2 (325 aa).

2 residues coordinate S-adenosyl-L-methionine: Trp96 and Tyr100. Positions 100, 112, 138, 140, 165, 191, and 212 each coordinate S-adenosyl-L-homocysteine. S-adenosyl-L-methionine-binding residues include Gly140, Asp165, Asp191, and Ile212.

This sequence belongs to the methyltransferase superfamily. METL family. In terms of assembly, interacts with Psn. As to expression, widely expressed. Expressed in ovaries, head, thorax and abdomen of adult flies, and in the CNS of third instar larvae. Isoform 2 is predominantly expressed in larvae and in adult tissues that have been tested.

Probable methyltransferase. The protein is tRNA N(3)-methylcytidine methyltransferase Mettl2 of Drosophila melanogaster (Fruit fly).